An 83-amino-acid chain; its full sequence is uncharacterized protein (83 aa).

The next 3 membrane-spanning stretches (helical) occupy residues 4–24 (AILS…GVLM), 32–52 (IGNI…LKAF), and 54–74 (YYDL…IIIG).

It localises to the cell membrane. This is an uncharacterized protein from Methanocaldococcus jannaschii (strain ATCC 43067 / DSM 2661 / JAL-1 / JCM 10045 / NBRC 100440) (Methanococcus jannaschii).